Here is a 313-residue protein sequence, read N- to C-terminus: Tetraspanning orphan receptor (313 aa).

Topologically, residues 1–54 (PQCESETNFHYDIPPGYKDDVLVDVNNMSPSLVSDTQKHERGSHEVKIKHFSPY) are extracellular. A helical transmembrane segment spans residues 55-75 (IAVCVTTFSLAFCCFMVHAAI). Residues 76–82 (TRQPTHL) are Cytoplasmic-facing. A helical transmembrane segment spans residues 83-103 (LPFFFIQVFDLIICLIHILGF). Residues 104 to 129 (MSSTSDIRLVIHTKTGPIYIKSTGLT) are Extracellular-facing. Residues 130-150 (FIILSISCMMLAFKAYCLGMV) form a helical membrane-spanning segment. Over 151–313 (WDCYKYLMLN…NASSNAHSSC (163 aa)) the chain is Cytoplasmic. Disordered regions lie at residues 192 to 218 (NNSI…YDPA) and 279 to 313 (NTNT…HSSC). A compositionally biased stretch (low complexity) spans 279 to 295 (NTNTSTTTSVISPLTTT). Over residues 301 to 313 (QINNASSNAHSSC) the composition is skewed to polar residues.

In terms of assembly, interacts (via N-terminal extracellular domain) with human C2a. Phosphorylated on tyrosine residues.

It localises to the cell membrane. Functionally, cell surface receptor that binds to human complement C2a protein. This results in inhibition of the classical and lectin pathways of complement activation, probably due to interference with binding of C2a to C4b and interference with cleavage by C1 or MASP2 such that C3 convertase cannot be formed. This infers resistance to complement-mediated cell lysis, allowing parasite survival and infection. This is Tetraspanning orphan receptor from Schistosoma haematobium (Blood fluke).